Reading from the N-terminus, the 294-residue chain is Protein RarD (294 aa).

Topologically, residues 1-11 are cytoplasmic; it reads MDAKQTRQGVL. The chain crosses the membrane as a helical span at residues 12-34; sequence LALAAYFIWGIAPAYFKLIYYVP. In terms of domain architecture, EamA spans 18–145; the sequence is FIWGIAPAYF…AVCGVLVQLW (128 aa). Residues 35–37 lie on the Periplasmic side of the membrane; it reads ADE. The helical transmembrane segment at 38-60 threads the bilayer; the sequence is ILTHRVIWSFFFMVALLSVSRQW. Topologically, residues 61-72 are cytoplasmic; that stretch reads RQVKRLLKTPKK. The helical transmembrane segment at 73 to 95 threads the bilayer; that stretch reads IFLLALSAVLVGGNWLLFIWAVN. The Periplasmic portion of the chain corresponds to 96–99; that stretch reads NHHM. The helical transmembrane segment at 100–122 threads the bilayer; it reads LEASLGYFINPLVNILLGMIFLG. The Cytoplasmic portion of the chain corresponds to 123 to 128; it reads ERFRRM. The helical transmembrane segment at 129–146 threads the bilayer; sequence QWLAVILAVCGVLVQLWT. The Periplasmic segment spans residues 147-149; the sequence is FGS. A helical transmembrane segment spans residues 150 to 167; sequence LPIIALGLAFSFAFYGLV. Residues 168–179 are Cytoplasmic-facing; the sequence is RKKIAVEAQTGM. The chain crosses the membrane as a helical span at residues 180–197; the sequence is LVETLWLLPVAAIYLFGI. The Periplasmic portion of the chain corresponds to 198–211; it reads ADSPTSHMGQNALS. The helical transmembrane segment at 212–234 threads the bilayer; it reads LNLLLMAAGVVTTIPLLCFTGAA. Residues 235–238 lie on the Cytoplasmic side of the membrane; it reads TRLR. A helical transmembrane segment spans residues 239–261; the sequence is LSTLGFFQYIGPTLMFLLAVTFY. Residues 262–270 lie on the Periplasmic side of the membrane; it reads GEVPGADKM. A helical transmembrane segment spans residues 271 to 290; sequence VTFAFIWVALAIFVMDAIYT. Topologically, residues 291 to 294 are cytoplasmic; that stretch reads QRKK.

It belongs to the EamA transporter family.

The protein resides in the cell inner membrane. This is Protein RarD (rarD) from Salmonella typhimurium (strain LT2 / SGSC1412 / ATCC 700720).